Consider the following 760-residue polypeptide: Cellulose synthase-like protein G1 (760 aa).

2 helical membrane-spanning segments follow: residues 28–48 (IYAI…VHSL) and 54–74 (TLIT…WATT). Catalysis depends on residues Asp142 and Asp447. 5 consecutive transmembrane segments (helical) span residues 530-550 (IPLT…VSVF), 558-578 (FWLY…DFLL), 593-613 (LMIK…LKTL), 656-676 (VAIV…FCGG), and 680-700 (LELM…GAMV).

This sequence belongs to the glycosyltransferase 2 family. Plant cellulose synthase-like G subfamily. In terms of tissue distribution, expressed in young seedlings, primarily in the vascular tissue.

It localises to the golgi apparatus membrane. Functionally, thought to be a Golgi-localized beta-glycan synthase that polymerize the backbones of noncellulosic polysaccharides (hemicelluloses) of plant cell wall. The sequence is that of Cellulose synthase-like protein G1 (CSLG1) from Arabidopsis thaliana (Mouse-ear cress).